The following is a 166-amino-acid chain: 3-isopropylmalate dehydratase small subunit (166 aa).

This sequence belongs to the LeuD family. LeuD type 2 subfamily. As to quaternary structure, heterodimer of LeuC and LeuD.

The catalysed reaction is (2R,3S)-3-isopropylmalate = (2S)-2-isopropylmalate. The protein operates within amino-acid biosynthesis; L-leucine biosynthesis; L-leucine from 3-methyl-2-oxobutanoate: step 2/4. Its function is as follows. Catalyzes the isomerization between 2-isopropylmalate and 3-isopropylmalate, via the formation of 2-isopropylmaleate. The chain is 3-isopropylmalate dehydratase small subunit from Caldicellulosiruptor bescii (strain ATCC BAA-1888 / DSM 6725 / KCTC 15123 / Z-1320) (Anaerocellum thermophilum).